We begin with the raw amino-acid sequence, 62 residues long: Large ribosomal subunit protein bL32 (62 aa).

The segment covering 1–16 (MAVPKRKTSPSRRGMR) has biased composition (basic residues). The tract at residues 1–62 (MAVPKRKTSP…QILKPKTAEV (62 aa)) is disordered. Over residues 28 to 44 (VEDKDSGELRRPHHLDL) the composition is skewed to basic and acidic residues.

It belongs to the bacterial ribosomal protein bL32 family.

This chain is Large ribosomal subunit protein bL32, found in Azorhizobium caulinodans (strain ATCC 43989 / DSM 5975 / JCM 20966 / LMG 6465 / NBRC 14845 / NCIMB 13405 / ORS 571).